We begin with the raw amino-acid sequence, 718 residues long: MNPNAVWPRTAQSSLKKHQVSLCTCQRRSHYRLRSFSTFADRKIHQSAGFSSSSKNHDRLSHRAREKLLDREFFLSLLSSASTQREAKSYLARLKAQHQPDLPQKPTSAPASTAKIPPLPSGVNLGSFYGASRSVYETPVFRQGPTPTPRQDQPERLHLALVKLSIPQTLDDTIIDGVAKTLAQLDRLGLTCCVMIDPGAAEDARLLRTLATEQADRLAIAIHKQPDSKSLRLDSVLSVDPATPHLPKVLSRKALLKPLRDGHTVILTPIAYTEDVPRAVMVSADDAVLALTRELAGLATFPDPDEDPLTTAERIGRLQKEVSLDRVILLHPLGGIPAFNWRQSSHVFINMEQEYDDIENELLQARDVISAGDANLTASDILQHPSSVAVSNPLSKFVHKEIVPLPPARSLSPMVPEAQRSAVEGHLENLRLSQKALAMLPSASSGIITSPIEVANSAKTDQPSDLSVVGTRRQRNPLIHNLLTDKPLLSSSLPMSRRGPIISAQGILNPVTSHTTFVKRGMPLTILPNPWVKPWSAQRQPRLRLDDPSIDLPRLVHLIEDSFNRKLDVQDYLNRVNDRLAGLIIAGEYEGGAILTWELPPGVQDDGSAENSARMVPYLDKFAVLKRSQGAGGVADIVFNAMVRTCFPNGVCWRSRKNNPVNKWYFERSLGTWKLSDTNWTMFWTTPGLVEDSQKFRDYEAVCRSIQPSWAEDTGVVD.

A mitochondrion-targeting transit peptide spans methionine 1–phenylalanine 36. The tract at residues glutamine 97–isoleucine 116 is disordered. The N-acetyltransferase domain occupies arginine 539–proline 708.

The protein belongs to the acetyltransferase family.

Its subcellular location is the mitochondrion. It catalyses the reaction L-glutamate + acetyl-CoA = N-acetyl-L-glutamate + CoA + H(+). It participates in amino-acid biosynthesis; L-arginine biosynthesis; N(2)-acetyl-L-ornithine from L-glutamate: step 1/4. Its function is as follows. N-acetylglutamate synthase involved in arginine biosynthesis. The protein is Amino-acid acetyltransferase, mitochondrial (arg2) of Aspergillus clavatus (strain ATCC 1007 / CBS 513.65 / DSM 816 / NCTC 3887 / NRRL 1 / QM 1276 / 107).